The chain runs to 158 residues: MGRFIFATLGLLLVAFSINGAKGCCCPHDWLTLKGFCYKVFNEHKTWNDAEMFCRKYKPGCHLASIHSGEESTDLAEYVSDYLKSGGNVWIGLNDPQKKRSWQWTDRSQNNFYPWKQGEPNNRANNENCVELWSPLGYKNWNDESCASTRAYLCKCRF.

The first 23 residues, 1–23 (MGRFIFATLGLLLVAFSINGAKG), serve as a signal peptide directing secretion. 3 disulfide bridges follow: cysteine 26–cysteine 37, cysteine 54–cysteine 154, and cysteine 129–cysteine 146. The C-type lectin domain maps to 33-155 (LKGFCYKVFN…CASTRAYLCK (123 aa)). Positions 119-121 (EPN) match the Mannose-binding motif. Ca(2+) is bound by residues glutamate 127, asparagine 142, and aspartate 143.

It belongs to the true venom lectin family. As to expression, expressed by the venom gland.

It is found in the secreted. Mannose-binding lectin which recognizes specific carbohydrate structures and agglutinates a variety of animal cells by binding to cell-surface glycoproteins and glycolipids. May be a calcium-dependent lectin. This is C-type lectin lectoxin-Thr1 from Thrasops jacksonii (Jackson's black tree snake).